The following is a 250-amino-acid chain: Probable transcriptional regulatory protein SACE_2018 (250 aa).

It belongs to the TACO1 family.

Its subcellular location is the cytoplasm. The sequence is that of Probable transcriptional regulatory protein SACE_2018 from Saccharopolyspora erythraea (strain ATCC 11635 / DSM 40517 / JCM 4748 / NBRC 13426 / NCIMB 8594 / NRRL 2338).